We begin with the raw amino-acid sequence, 121 residues long: Putative iron-sulfur cluster insertion protein ErpA (121 aa).

The iron-sulfur cluster site is built by C49, C113, and C115.

Belongs to the HesB/IscA family. As to quaternary structure, homodimer. It depends on iron-sulfur cluster as a cofactor.

Required for insertion of 4Fe-4S clusters. In Paracidovorax citrulli (strain AAC00-1) (Acidovorax citrulli), this protein is Putative iron-sulfur cluster insertion protein ErpA.